A 243-amino-acid chain; its full sequence is Methylthioribulose-1-phosphate dehydratase (243 aa).

A substrate-binding site is contributed by Cys90. Zn(2+)-binding residues include His108 and His110. The active-site Proton donor/acceptor is Glu131. His193 contributes to the Zn(2+) binding site.

Belongs to the aldolase class II family. MtnB subfamily. Requires Zn(2+) as cofactor.

Its subcellular location is the cytoplasm. It carries out the reaction 5-(methylsulfanyl)-D-ribulose 1-phosphate = 5-methylsulfanyl-2,3-dioxopentyl phosphate + H2O. It functions in the pathway amino-acid biosynthesis; L-methionine biosynthesis via salvage pathway; L-methionine from S-methyl-5-thio-alpha-D-ribose 1-phosphate: step 2/6. Its function is as follows. Catalyzes the dehydration of methylthioribulose-1-phosphate (MTRu-1-P) into 2,3-diketo-5-methylthiopentyl-1-phosphate (DK-MTP-1-P). This is Methylthioribulose-1-phosphate dehydratase from Zygosaccharomyces rouxii (strain ATCC 2623 / CBS 732 / NBRC 1130 / NCYC 568 / NRRL Y-229).